Consider the following 386-residue polypeptide: N-acetylneuraminate epimerase (386 aa).

An N-terminal signal peptide occupies residues 1–29 (MGMQMKNFKKMMTLMALCLSVAITTSGYA). Kelch repeat units lie at residues 51 to 95 (VIYV…VFLN), 97 to 149 (ELYV…VKLN), 151 to 186 (TMVL…KVIY), 187 to 232 (NYFN…VMEN), 235 to 284 (LMLI…LAGA), 306 to 355 (QNYT…SYGD), and 357 to 386 (VFLI…LLIK). E241 acts as the Proton acceptor in catalysis.

Belongs to the NanM family. In terms of assembly, homodimer.

The protein localises to the periplasm. The catalysed reaction is N-acetyl-alpha-neuraminate = N-acetyl-beta-neuraminate. Functionally, converts alpha-N-acetylneuranimic acid (Neu5Ac) to the beta-anomer, accelerating the equilibrium between the alpha- and beta-anomers. Probably facilitates sialidase-negative bacteria to compete successfully for limited amounts of extracellular Neu5Ac, which is likely taken up in the beta-anomer. In addition, the rapid removal of sialic acid from solution might be advantageous to the bacterium to damp down host responses. The chain is N-acetylneuraminate epimerase from Salmonella choleraesuis (strain SC-B67).